The chain runs to 343 residues: 5-amino-6-(D-ribitylamino)uracil--L-tyrosine 4-hydroxyphenyl transferase (343 aa).

Residues 39-268 (VTYVVNRNIN…AIARILLYPE (230 aa)) enclose the Radical SAM core domain. 3 residues coordinate [4Fe-4S] cluster: cysteine 53, cysteine 57, and cysteine 60.

This sequence belongs to the radical SAM superfamily. CofH family. As to quaternary structure, consists of two subunits, CofG and CofH. Requires [4Fe-4S] cluster as cofactor.

The catalysed reaction is 5-amino-6-(D-ribitylamino)uracil + L-tyrosine + S-adenosyl-L-methionine = 5-amino-5-(4-hydroxybenzyl)-6-(D-ribitylimino)-5,6-dihydrouracil + 2-iminoacetate + 5'-deoxyadenosine + L-methionine + H(+). It functions in the pathway cofactor biosynthesis; coenzyme F0 biosynthesis. In terms of biological role, catalyzes the radical-mediated synthesis of 5-amino-5-(4-hydroxybenzyl)-6-(D-ribitylimino)-5,6-dihydrouracil from 5-amino-6-(D-ribitylamino)uracil and L-tyrosine. In Archaeoglobus fulgidus (strain ATCC 49558 / DSM 4304 / JCM 9628 / NBRC 100126 / VC-16), this protein is 5-amino-6-(D-ribitylamino)uracil--L-tyrosine 4-hydroxyphenyl transferase.